The primary structure comprises 643 residues: MSLVMDSLKNLLLSPLRGFIHKDFHDIFERMTLLSKLLFLIVHLVDKLNLWHRLPVLLGLLYLGARRHLHQEYNLINVGKTPIGVRSNPADHPYRTADGKYNDPFNEGAGSELSFFGRNMLPVDQHNQLKKPDPMVVATKLLARRNFVDTGKQFNMIAASWIQFMIHDWIDHLEDTKQIELKAAEEVASQCPLKSFKFFKTKEIPTGFYEIKTGHLNTRTPWWDGSAIYGSNAEVLKKVRTFKDGKLKLSADGLLEIDKNGKIISGDVRNTWAGLSALQALFVQEHNSVCDALKKEYPELEEEDLYRHARLVTSAVIAKVHTIDWTVELLKTDTLLAGMRANWYGLLGKKFKDTFGHVGGSILGGFVGMKKPENYGVPYSLTEEFTSVYRMHQLLPDKLQLRNIDATPGPNKSLPLTNEIPLEDLIGGKGEENLSKIGFTKQMVSMGHQACGALELWNYPVWMRDLIPQDVDGTDRPDHIDLAALEIYRDRERSVARYNEFRRGMLQIPISKWEDLTDDEEVINTLGEVYGDDVEELDLMVGMAAEKKIKGFAISETAFFIFLVMASRRLEADRFFTSNYNEETYTKKGLEWVNTTESLKDVLDRHYPEITEKWMNSSSAFSVWDSTPQPHNPIPLYFRVPPQ.

H167 acts as the Proton acceptor in catalysis. Residue D168 participates in Ca(2+) binding. H172 is a heme b binding site. Ca(2+) contacts are provided by T220, W222, D224, and S226. Residues H392, R489, and R493 each contribute to the heme b site.

It belongs to the peroxidase family. It depends on heme b as a cofactor. Ca(2+) serves as cofactor.

The catalysed reaction is a 1,2-saturated fatty acid + O2 = a (2R)-2-hydroperoxy fatty acid. It carries out the reaction (9Z,12Z,15Z)-octadecatrienoate + O2 = (R)-2-hydroperoxy-(9Z,12Z,15Z)-octadecatrienoate. The enzyme catalyses (9Z,12Z)-octadecadienoate + O2 = (2R,9Z,12Z)-2-hydroperoxyoctadecadienoate. Functionally, alpha-dioxygenase that catalyzes the primary oxygenation step of a variety of 14-20 carbon fatty acids, containing up to three unsaturated bonds, into their corresponding 2R-hydroperoxides. Involved in the production of oxylipins that function in cell signaling, wound healing, and protection from infection. The protein is Alpha-dioxygenase PIOX of Nicotiana tabacum (Common tobacco).